We begin with the raw amino-acid sequence, 366 residues long: S-adenosylmethionine:tRNA ribosyltransferase-isomerase (366 aa).

The protein belongs to the QueA family. Monomer.

It localises to the cytoplasm. It catalyses the reaction 7-aminomethyl-7-carbaguanosine(34) in tRNA + S-adenosyl-L-methionine = epoxyqueuosine(34) in tRNA + adenine + L-methionine + 2 H(+). The protein operates within tRNA modification; tRNA-queuosine biosynthesis. Its function is as follows. Transfers and isomerizes the ribose moiety from AdoMet to the 7-aminomethyl group of 7-deazaguanine (preQ1-tRNA) to give epoxyqueuosine (oQ-tRNA). This is S-adenosylmethionine:tRNA ribosyltransferase-isomerase from Bradyrhizobium diazoefficiens (strain JCM 10833 / BCRC 13528 / IAM 13628 / NBRC 14792 / USDA 110).